The sequence spans 472 residues: ATP synthase subunit beta (472 aa).

Position 157-164 (157-164 (GGAGVGKT)) interacts with ATP.

Belongs to the ATPase alpha/beta chains family. In terms of assembly, F-type ATPases have 2 components, CF(1) - the catalytic core - and CF(0) - the membrane proton channel. CF(1) has five subunits: alpha(3), beta(3), gamma(1), delta(1), epsilon(1). CF(0) has three main subunits: a(1), b(2) and c(9-12). The alpha and beta chains form an alternating ring which encloses part of the gamma chain. CF(1) is attached to CF(0) by a central stalk formed by the gamma and epsilon chains, while a peripheral stalk is formed by the delta and b chains.

The protein localises to the cell membrane. It catalyses the reaction ATP + H2O + 4 H(+)(in) = ADP + phosphate + 5 H(+)(out). Functionally, produces ATP from ADP in the presence of a proton gradient across the membrane. The catalytic sites are hosted primarily by the beta subunits. In Desulforamulus reducens (strain ATCC BAA-1160 / DSM 100696 / MI-1) (Desulfotomaculum reducens), this protein is ATP synthase subunit beta.